A 425-amino-acid polypeptide reads, in one-letter code: F-box/LRR-repeat protein At3g59250 (425 aa).

In terms of domain architecture, F-box spans lysine 6–serine 54. 5 LRR repeats span residues aspartate 86–serine 113, methionine 138–asparagine 163, cysteine 185–aspartate 210, cysteine 264–threonine 293, and asparagine 294–glycine 319.

The sequence is that of F-box/LRR-repeat protein At3g59250 from Arabidopsis thaliana (Mouse-ear cress).